The primary structure comprises 135 residues: MESSLDRLNFDEFVAKLLIHESKKKNKSFVDHGYIEKEKTKLRPNKVFLNNMVRNVQSHNRGINNRRRDQKRKQLISIKQDNDLNVSSERLSRRIDVPRPTSKKKRLYKETPDLDEPGSREKRVSQKGQLKIEKV.

Residues 56–135 (VQSHNRGINN…QKGQLKIEKV (80 aa)) are disordered. A compositionally biased stretch (basic residues) spans 64–74 (NNRRRDQKRKQ). Residues 77–89 (SIKQDNDLNVSSE) show a composition bias toward polar residues. The segment covering 108-135 (YKETPDLDEPGSREKRVSQKGQLKIEKV) has biased composition (basic and acidic residues).

This is an uncharacterized protein from Schizosaccharomyces pombe (strain 972 / ATCC 24843) (Fission yeast).